Consider the following 555-residue polypeptide: Carboxypeptidase Y homolog A (555 aa).

Residues 1–17 (MRGLATTLLIGAAAAAT) form the signal peptide. The propeptide occupies 18 to 136 (YPAQQVLKAP…RLETFDLRVK (119 aa)). Cystine bridges form between Cys-191-Cys-430, Cys-325-Cys-339, Cys-349-Cys-372, Cys-356-Cys-365, and Cys-394-Cys-400. Residue Asn-222 is glycosylated (N-linked (GlcNAc...) asparagine). Residue Ser-278 is part of the active site. Asp-469 is an active-site residue. Asn-520 carries N-linked (GlcNAc...) asparagine glycosylation. The active site involves His-531.

Belongs to the peptidase S10 family.

The protein resides in the vacuole. It carries out the reaction Release of a C-terminal amino acid with broad specificity.. In terms of biological role, vacuolar carboxypeptidase involved in degradation of small peptides. Digests preferentially peptides containing an aliphatic or hydrophobic residue in P1' position, as well as methionine, leucine or phenylalanine in P1 position of ester substrate. This chain is Carboxypeptidase Y homolog A (cpyA), found in Talaromyces marneffei (strain ATCC 18224 / CBS 334.59 / QM 7333) (Penicillium marneffei).